The following is a 193-amino-acid chain: dCTP deaminase (193 aa).

Residues 110-115 (RSSLAR), Asp128, 136-138 (VLE), Tyr171, Lys178, and Gln182 each bind dCTP. Glu138 serves as the catalytic Proton donor/acceptor. Residues 170–193 (PYNSRQDAKYRGQQGAVASRIDKD) are disordered.

Belongs to the dCTP deaminase family. As to quaternary structure, homotrimer.

The enzyme catalyses dCTP + H2O + H(+) = dUTP + NH4(+). It functions in the pathway pyrimidine metabolism; dUMP biosynthesis; dUMP from dCTP (dUTP route): step 1/2. Its function is as follows. Catalyzes the deamination of dCTP to dUTP. This chain is dCTP deaminase, found in Yersinia enterocolitica serotype O:8 / biotype 1B (strain NCTC 13174 / 8081).